The sequence spans 157 residues: Transmembrane protein 50A (157 aa).

An N-acetylserine modification is found at serine 2. A Phosphoserine modification is found at serine 2. 4 helical membrane-spanning segments follow: residues 26-46 (IAAG…AVIY), 58-78 (ACGV…NGQV), 95-115 (IWLF…MWIL), and 126-146 (IVYP…GGLV).

Belongs to the UPF0220 family.

Its subcellular location is the membrane. The protein is Transmembrane protein 50A (TMEM50A) of Homo sapiens (Human).